A 712-amino-acid chain; its full sequence is Cyclolysin secretion/processing ATP-binding protein CyaB (712 aa).

The region spanning 7–128 is the Peptidase C39 domain; the sequence is QCASVPDSGL…ALWAGELLLC (122 aa). Residues 157 to 439 form the ABC transmembrane type-1 domain; it reads IGEVLLISLV…LAQLWNDFQQ (283 aa). The next 6 helical transmembrane spans lie at 160 to 180, 194 to 214, 272 to 292, 298 to 318, 367 to 387, and 390 to 410; these read VLLI…FFQV, LNVI…LTGI, AVTV…MFFY, LVVL…TPVL, VAAG…VTLI, and LVAL…RMTV. The ABC transporter domain maps to 471 to 706; it reads IELDRVSFRY…GGLYARLQAL (236 aa). ATP is bound at residue 505 to 512; that stretch reads GRSGSGKS.

This sequence belongs to the ABC transporter superfamily. Cyclolysin exporter (TC 3.A.1.109.2) family.

It is found in the cell membrane. Functionally, involved in the export of calmodulin-sensitive adenylate cyclase-hemolysin (cyclolysin). This chain is Cyclolysin secretion/processing ATP-binding protein CyaB (cyaB), found in Bordetella pertussis (strain ATCC 9797 / DSM 5571 / CCUG 30873 / LMG 14455 / NCTC 10739 / 18323).